We begin with the raw amino-acid sequence, 339 residues long: DNA-directed RNA polymerase subunit alpha (339 aa).

The interval 1 to 235 (MVIQRNWQSL…DQLQLFINFE (235 aa)) is alpha N-terminal domain (alpha-NTD). Residues 251–339 (FNRNLLRKVD…DLAKRLEEPF (89 aa)) form an alpha C-terminal domain (alpha-CTD) region.

The protein belongs to the RNA polymerase alpha chain family. In terms of assembly, homodimer. The RNAP catalytic core consists of 2 alpha, 1 beta, 1 beta' and 1 omega subunit. When a sigma factor is associated with the core the holoenzyme is formed, which can initiate transcription.

It carries out the reaction RNA(n) + a ribonucleoside 5'-triphosphate = RNA(n+1) + diphosphate. Its function is as follows. DNA-dependent RNA polymerase catalyzes the transcription of DNA into RNA using the four ribonucleoside triphosphates as substrates. The protein is DNA-directed RNA polymerase subunit alpha of Granulibacter bethesdensis (strain ATCC BAA-1260 / CGDNIH1).